A 748-amino-acid polypeptide reads, in one-letter code: Basic juvenile hormone-suppressible protein 1 (748 aa).

The signal sequence occupies residues 1–17 (MRVLVLVASLGLRGSVV).

The protein belongs to the hemocyanin family. Fat body, and hemolymph of larvae.

The polypeptide is Basic juvenile hormone-suppressible protein 1 (BJSP-1) (Trichoplusia ni (Cabbage looper)).